A 1222-amino-acid chain; its full sequence is MSLPERPGASQAYNQRSVYRNSPSRRSRPVDIETGGYHAVDNQASHQRGKSGSSFAESIGINSNTESMPLSPTSPDGQSRHAGPEQPISRKRSLIRPERNRIDRDHRNYHYHKHAAHMNVLPSSTGNDPIYEDFEASTERTNSNYNEGGSDGSPRQRRTVSGDHEKSAAVASTLPTPDRTKSGKIKRKSRRHSKPPKRIEEQLRPPTFWNVYCAIVTFWAPGFIMKCCGMPTRAQQRAWREKMGLISIILIIMAIVGFLTFGFTATVCGAPQERLRVNKVDGGNMIFHGVAYDLSESHHPPAQGMPLRSDGLGPNVLYDLPEKNAGKDGSFLFQNVNGRCKGLITLAKGSDVPTNDDGDLAWYFPCKTFNQDGSSKVNTTTPYYSGYGCHTTLDSRNAFYLDLKGAADVYFTWDDIKNKSRNLVVYSGNVLDLDLLKWFNSTQVDIPERFKELRDKNSAVNKAIRGRDVTRMFQSSSDKKYAQCFEEIIKVGSVDTETIGCIASKIVLYCALALILSVVGVRFFLAIIFQWFICRKYAPTKTSQSSDRRKRNKQIEDWSEDIYRAPIRLPGDVGSTVYGSSDRSSKRASFLPTTSRFSSVGGPDIRSQGGRRMPTTMASQSTSNQLLTPNSMFKQGNDSRASFLRTDPYSSTPTDGPGPAGFIHDAVVPQPPSDWMPFGFPLAHTMCLVTAYSEGEEGIRTTLDSIATTDYPNSHKVIVVICDGIIKGQGETMSTPDVCLGMLKDHSIPPDMVEPFSYVAVASGSKRHNMAKIYCGFYDYGKNSRIPADRQQRVPMMVVVKCGTPDEASKSKPGNRGKRDSQIILMSFLQKVMFDERMTELEYEMFNGLWKVTGISPDYYEIILMVDADTKVFPDSLTHMISAMVKDPEIMGLCGETKIANKRDSWVTAIQVFEYFVSHHLAKSFESVFGGVTCLPGCFCMYRIKAPKGGHNYWVPILANPDIVEHYSENVVETLHEKNLYLLGEDRFLTTLMLRTFPKRKQVFIPQAVCKTTVPDEFMVLLSQRRRWINSTIHNLMELVLVRDLCGTFCFSMQFIIFVELVGTLVLPAAIAFTFYVVITSIINSPPQIIPLVLLGLILGLPGLLVIITAHSWSYIVWMLIYLLALPIWNFVLPTYAFWKFDDFSWGETRKTAGEKTKKAGLEYEGEFDSSKITMKRWAEFERDKRSRSGYWGSRENVIGGGGQTWTSPPGHQYNEEYYSDA.

Disordered regions lie at residues 1–101 (MSLP…ERNR) and 138–200 (TERT…KRIE). 2 stretches are compositionally biased toward polar residues: residues 11–24 (QAYN…NSPS) and 42–77 (NQAS…SPDG). Basic residues predominate over residues 182–196 (SGKIKRKSRRHSKPP). The next 2 helical transmembrane spans lie at 205–225 (PPTF…GFIM) and 243–263 (MGLI…TFGF). Asparagine 378, asparagine 418, and asparagine 440 each carry an N-linked (GlcNAc...) asparagine glycan. Residues 513-533 (ALILSVVGVRFFLAIIFQWFI) traverse the membrane as a helical segment. The tract at residues 576–630 (TVYGSSDRSSKRASFLPTTSRFSSVGGPDIRSQGGRRMPTTMASQSTSNQLLTPN) is disordered. A compositionally biased stretch (polar residues) spans 616–630 (TMASQSTSNQLLTPN). N-linked (GlcNAc...) asparagine glycosylation is found at asparagine 637 and asparagine 1030. Transmembrane regions (helical) follow at residues 1055-1075 (FIIF…AFTF), 1089-1109 (IIPL…VIIT), and 1113-1133 (WSYI…NFVL). The tract at residues 1202 to 1222 (GGQTWTSPPGHQYNEEYYSDA) is disordered.

Belongs to the chitin synthase family. Class IV subfamily.

The protein localises to the cell membrane. The catalysed reaction is [(1-&gt;4)-N-acetyl-beta-D-glucosaminyl](n) + UDP-N-acetyl-alpha-D-glucosamine = [(1-&gt;4)-N-acetyl-beta-D-glucosaminyl](n+1) + UDP + H(+). Polymerizes chitin, a structural polymer of the cell wall and septum, by transferring the sugar moiety of UDP-GlcNAc to the non-reducing end of the growing chitin polymer. Shows additive effects in septum formation with CHS1, CHS2, CHS3A, CHS5, CHS6 and CHS7. Regulates conidiation. Involved in virulence and mediates mycotoxin deoxinivalenol (DON) biosynthesis via the regulation of the expression of TRI4, TRI5 and TRI6. The polypeptide is Chitin synthase 4 (Gibberella zeae (strain ATCC MYA-4620 / CBS 123657 / FGSC 9075 / NRRL 31084 / PH-1) (Wheat head blight fungus)).